A 97-amino-acid chain; its full sequence is Co-chaperonin GroES (97 aa).

This sequence belongs to the GroES chaperonin family. Heptamer of 7 subunits arranged in a ring. Interacts with the chaperonin GroEL.

Its subcellular location is the cytoplasm. Functionally, together with the chaperonin GroEL, plays an essential role in assisting protein folding. The GroEL-GroES system forms a nano-cage that allows encapsulation of the non-native substrate proteins and provides a physical environment optimized to promote and accelerate protein folding. GroES binds to the apical surface of the GroEL ring, thereby capping the opening of the GroEL channel. In Escherichia fergusonii (strain ATCC 35469 / DSM 13698 / CCUG 18766 / IAM 14443 / JCM 21226 / LMG 7866 / NBRC 102419 / NCTC 12128 / CDC 0568-73), this protein is Co-chaperonin GroES.